The chain runs to 185 residues: Small ribosomal subunit protein uS4c (185 aa).

Residues 72 to 134 form the S4 RNA-binding domain; it reads MRLDNVIFRL…PTSCNALKGE (63 aa). Residues 132 to 154 form a disordered region; that stretch reads KGESPGGGETPDHLTASLSEGSR.

This sequence belongs to the universal ribosomal protein uS4 family. In terms of assembly, part of the 30S ribosomal subunit. Contacts protein S5. The interaction surface between S4 and S5 is involved in control of translational fidelity.

The protein resides in the plastid. It is found in the chloroplast. Functionally, one of the primary rRNA binding proteins, it binds directly to 16S rRNA where it nucleates assembly of the body of the 30S subunit. With S5 and S12 plays an important role in translational accuracy. In Woodwardia radicans (Rooting chainfern), this protein is Small ribosomal subunit protein uS4c (rps4).